The sequence spans 226 residues: N-(5'-phosphoribosyl)anthranilate isomerase (226 aa).

Belongs to the TrpF family.

The enzyme catalyses N-(5-phospho-beta-D-ribosyl)anthranilate = 1-(2-carboxyphenylamino)-1-deoxy-D-ribulose 5-phosphate. It functions in the pathway amino-acid biosynthesis; L-tryptophan biosynthesis; L-tryptophan from chorismate: step 3/5. This is N-(5'-phosphoribosyl)anthranilate isomerase (TRP1) from Saccharomyces kudriavzevii (strain ATCC MYA-4449 / AS 2.2408 / CBS 8840 / NBRC 1802 / NCYC 2889) (Yeast).